The following is a 350-amino-acid chain: Phosphotriesterase-related protein (350 aa).

A divalent metal cation contacts are provided by His-22, His-24, Glu-169, His-201, His-230, and Asp-298.

The protein belongs to the metallo-dependent hydrolases superfamily. Phosphotriesterase family. Requires a divalent metal cation as cofactor.

This Drosophila erecta (Fruit fly) protein is Phosphotriesterase-related protein.